The primary structure comprises 152 residues: MANSERTFIAIKPDGVQRGLMGEIIKRFEQKGFRLVAMKFMRASEDLLKEHYIDLKDRPFFAGLVKYMHSGPVVAMVWEGLNVVKTGRVMLGETNPADSKPGTIRGDFCIQVGRNIIHGSDSVESAEKEIALWFRPEELVNYKSCAQNWIYE.

Lys12, Phe60, Arg88, Thr94, Arg105, and Asn115 together coordinate ATP. His118 serves as the catalytic Pros-phosphohistidine intermediate.

Belongs to the NDK family. Homohexamer. It depends on Mg(2+) as a cofactor. In terms of processing, the N-terminus is blocked.

The protein resides in the cytoplasm. The protein localises to the cell membrane. Its subcellular location is the nucleus. The catalysed reaction is a 2'-deoxyribonucleoside 5'-diphosphate + ATP = a 2'-deoxyribonucleoside 5'-triphosphate + ADP. It carries out the reaction a ribonucleoside 5'-diphosphate + ATP = a ribonucleoside 5'-triphosphate + ADP. With respect to regulation, autophosphorylation at His-118 increases serine/threonine protein kinase activity of the enzyme. Interaction with the SET complex inhibits exonuclease activity. Major role in the synthesis of nucleoside triphosphates other than ATP. Possesses nucleoside-diphosphate kinase, serine/threonine-specific protein kinase, geranyl and farnesyl pyrophosphate kinase, histidine protein kinase and 3'-5' exonuclease activities. Involved in cell proliferation, differentiation and development, signal transduction, G protein-coupled receptor endocytosis, and gene expression. Required for neural development including neural patterning and cell fate determination. The protein is Nucleoside diphosphate kinase A 2 (NME1-2) of Bos taurus (Bovine).